The following is a 257-amino-acid chain: MMFHPFHLVEKSPWPITSSISALSLTLGFVSYFQNLSMYLILLAVLMITISSFQWWRDISREGSFQGFHTHWVLNGLKMGMILFILSEVFFFVSFFWAFFHSSLSPNIEIGSQWPPKGIYPFNPFEIPLLNSTILISSGITVTWSHHAIMNKNYISALNSLLITILLGVAFTMFQGFEYFQAQFKISDGIFGSTFFMTTGFHGLHVLIGSIFLLVSYFRIKNQLISSDHFFGFEASAWYWHFVDVVWLFLFTFMYWW.

A run of 6 helical transmembrane segments spans residues 13–33 (PWPITSSISALSLTLGFVSYF), 36–56 (LSMYLILLAVLMITISSFQWW), 80–100 (GMILFILSEVFFFVSFFWAFF), 154–174 (YISALNSLLITILLGVAFTMF), 195–215 (FFMTTGFHGLHVLIGSIFLLV), and 237–257 (AWYWHFVDVVWLFLFTFMYWW).

Belongs to the cytochrome c oxidase subunit 3 family. Component of the cytochrome c oxidase (complex IV, CIV), a multisubunit enzyme composed of a catalytic core of 3 subunits and several supernumerary subunits. The complex exists as a monomer or a dimer and forms supercomplexes (SCs) in the inner mitochondrial membrane with ubiquinol-cytochrome c oxidoreductase (cytochrome b-c1 complex, complex III, CIII).

The protein localises to the mitochondrion inner membrane. It carries out the reaction 4 Fe(II)-[cytochrome c] + O2 + 8 H(+)(in) = 4 Fe(III)-[cytochrome c] + 2 H2O + 4 H(+)(out). Component of the cytochrome c oxidase, the last enzyme in the mitochondrial electron transport chain which drives oxidative phosphorylation. The respiratory chain contains 3 multisubunit complexes succinate dehydrogenase (complex II, CII), ubiquinol-cytochrome c oxidoreductase (cytochrome b-c1 complex, complex III, CIII) and cytochrome c oxidase (complex IV, CIV), that cooperate to transfer electrons derived from NADH and succinate to molecular oxygen, creating an electrochemical gradient over the inner membrane that drives transmembrane transport and the ATP synthase. Cytochrome c oxidase is the component of the respiratory chain that catalyzes the reduction of oxygen to water. Electrons originating from reduced cytochrome c in the intermembrane space (IMS) are transferred via the dinuclear copper A center (CU(A)) of subunit 2 and heme A of subunit 1 to the active site in subunit 1, a binuclear center (BNC) formed by heme A3 and copper B (CU(B)). The BNC reduces molecular oxygen to 2 water molecules using 4 electrons from cytochrome c in the IMS and 4 protons from the mitochondrial matrix. This Rhipicephalus sanguineus (Brown dog tick) protein is Cytochrome c oxidase subunit 3 (COIII).